Consider the following 408-residue polypeptide: MDTSSEGDHELAPNDISFNTIPFSLNFHPTEDLLVVSDAEGRLKLFKYSLDENEVKLSLRPHQSGCRQANFSSDGKYIFTASSDCSMKVIDINTGSILYTREEAHDYPINCLVSKEFMVFTGDDEGTIKVWDMRQQNIVCEFQEHGDFISDITTIDDRHIAATSGDGGVSIYNFVRKSMDDISEKSDNELLSCLSLDNGQKLVCGSQDGSILIYDRNNLENVKKFAGHPQSVDALVKVNNNTFFSGSSDGIIRFIGLRPKKLLGVVGEHSTFPIERMAISRDNRYLGSISHDFSLKFWNVASFYEEDESEDADSANANANEIENDDDDDDDDDEIEDIENATKVDDDSGSEMGDDDDDDDDEEQEEEEESSSDEDIKRKKPQQNPIKAQQIEKQKQKQNQKRSFFKDL.

WD repeat units lie at residues 17-56 (SFNT…NEVK), 61-100 (PHQS…ILYT), 104-141 (AHDY…IVCE), 144-183 (EHGD…DDIS), 186-224 (SDNE…NVKK), 227-265 (GHPQ…LLGV), and 268-308 (EHST…EEDE). The disordered stretch occupies residues 308-408 (ESEDADSANA…NQKRSFFKDL (101 aa)). Acidic residues-rich tracts occupy residues 322–339 (IEND…EDIE) and 347–373 (DSGS…SSSD).

This sequence belongs to the WD repeat WDR55 family.

The chain is WD repeat-containing protein 55 homolog (wdr55) from Dictyostelium discoideum (Social amoeba).